The chain runs to 344 residues: Palmitoyltransferase ZDHHC4 (344 aa).

Over M1–D2 the chain is Lumenal. Residues F3–V23 traverse the membrane as a helical segment. Residues C24–T67 are Cytoplasmic-facing. Residues F68–F88 traverse the membrane as a helical segment. The Lumenal portion of the chain corresponds to G89–H99. Residues Y100–G120 form a helical membrane-spanning segment. Residues T121–R192 lie on the Cytoplasmic side of the membrane. In terms of domain architecture, DHHC spans V149–L199. C179 functions as the S-palmitoyl cysteine intermediate in the catalytic mechanism. The chain crosses the membrane as a helical span at residues Y193–T213. Over T214 to R255 the chain is Lumenal. The chain crosses the membrane as a helical span at residues I256–F276. Residues V277 to E344 lie on the Cytoplasmic side of the membrane. A Di-lysine motif motif is present at residues K341–E344.

Belongs to the DHHC palmitoyltransferase family. Interacts with CPT1A.

It is found in the endoplasmic reticulum membrane. Its subcellular location is the golgi apparatus membrane. It localises to the cell membrane. The catalysed reaction is L-cysteinyl-[protein] + hexadecanoyl-CoA = S-hexadecanoyl-L-cysteinyl-[protein] + CoA. Palmitoyltransferase that catalyzes the addition of palmitate onto protein substrates including the D(2) dopamine receptor DRD2, GSK3B or MAVS. Mediates GSK3B palmitoylation to prevent its AKT1-mediated phosphorylation leading to activation of the STAT3 signaling pathway. Also catalyzes MAVS palmitoylation which promotes its stabilization and activation by inhibiting 'Lys-48'- but facilitating 'Lys-63'-linked ubiquitination. The protein is Palmitoyltransferase ZDHHC4 of Homo sapiens (Human).